A 175-amino-acid polypeptide reads, in one-letter code: Disulfide bond formation protein B (175 aa).

The Cytoplasmic segment spans residues 1–13; that stretch reads MTALTRFAHSRSS. Residues 14-30 traverse the membrane as a helical segment; that stretch reads WFLLTGTAIGLEAAALY. Topologically, residues 31 to 48 are periplasmic; it reads FQYVMKLDPCVMCIYQRL. Cysteine 40 and cysteine 43 are joined by a disulfide. A helical transmembrane segment spans residues 49-64; sequence AVFGILVAGLIGMTAP. At 65–71 the chain is on the cytoplasmic side; sequence KYRLIRI. Residues 72-89 traverse the membrane as a helical segment; sequence LGASCWAVSATWGLKLAL. The Periplasmic portion of the chain corresponds to 90 to 144; sequence ALVNMQNNPSPFATCSFLPEFPTWMPLHEWFPAVMLPTGMCTDLPWRFMDVTMAE. Residues cysteine 104 and cysteine 130 are joined by a disulfide bond. A helical membrane pass occupies residues 145–163; the sequence is WMVVVFSTFLVIWLLFIVP. Residues 164–175 are Cytoplasmic-facing; sequence ILSGSTKPSLYK.

The protein belongs to the DsbB family.

The protein localises to the cell inner membrane. In terms of biological role, required for disulfide bond formation in some periplasmic proteins. Acts by oxidizing the DsbA protein. The protein is Disulfide bond formation protein B of Shewanella sp. (strain W3-18-1).